Reading from the N-terminus, the 247-residue chain is Sugar fermentation stimulation protein homolog (247 aa).

This sequence belongs to the SfsA family.

The polypeptide is Sugar fermentation stimulation protein homolog (Aeromonas hydrophila subsp. hydrophila (strain ATCC 7966 / DSM 30187 / BCRC 13018 / CCUG 14551 / JCM 1027 / KCTC 2358 / NCIMB 9240 / NCTC 8049)).